The chain runs to 530 residues: Potassium voltage-gated channel subfamily A member 6 (530 aa).

Positions 1–35 (MRSEKSLTLAAPGEVRGPEGEQQDAGEFQEAEGGG) are disordered. Serine 3 is modified (phosphoserine). Acidic residues predominate over residues 21-30 (EQQDAGEFQE). A helical membrane pass occupies residues 172–193 (PARGIAIVSVLVILISIVIFCL). The disordered stretch occupies residues 203–239 (GRGGSNEGSGTRMSPASRGSHEEEDEDEDSYAFPGSI). Serine 222 carries the phosphoserine; by CK2 modification. The helical transmembrane segment at 264–285 (FFLVETLCIVWFTFELLVRFSA) threads the bilayer. Cysteine 286 carries S-palmitoyl cysteine lipidation. The chain crosses the membrane as a helical span at residues 297–317 (MNIIDLVAIFPYFITLGTELV). The chain crosses the membrane as a helical; Voltage-sensor span at residues 339-359 (LAILRVIRLVRVFRIFKLSRH). An S4-S5 linker region spans residues 361–374 (KGLQILGKTLQASM). A helical membrane pass occupies residues 375–396 (RELGLLIFFLFIGVILFSSAVY). An intramembrane region (helical) is located at residues 411-422 (PDAFWWAVVTMT). The Selectivity filter motif lies at 423 to 428 (TVGYGD). The stretch at 423–430 (TVGYGDMY) is an intramembrane region. The chain crosses the membrane as a helical span at residues 438–466 (IVGSLCAIAGVLTIALPVPVIVSNFNYFY). At serine 512 the chain carries Phosphoserine; by PKA. A PDZ-binding motif is present at residues 527–529 (LTE). Threonine 528 carries the post-translational modification Phosphothreonine; by PKA.

The protein belongs to the potassium channel family. A (Shaker) (TC 1.A.1.2) subfamily. Kv1.6/KCNA6 sub-subfamily. In terms of assembly, homotetramer and heterotetramer of potassium channel proteins. Interacts with KCNAB1 and KCNAB2.

It is found in the cell membrane. It carries out the reaction K(+)(in) = K(+)(out). Its function is as follows. Voltage-gated potassium channel that mediates transmembrane potassium transport in excitable membranes. Forms tetrameric potassium-selective channels through which potassium ions pass in accordance with their electrochemical gradient. The channel alternates between opened and closed conformations in response to the voltage difference across the membrane. Can form functional homotetrameric channels and heterotetrameric channels that contain variable proportions of KCNA1, KCNA2, KCNA4, KNCA5, KCNA6, and possibly other family members as well; channel properties depend on the type of alpha subunits that are part of the channel. Channel properties are modulated by cytoplasmic beta subunits that regulate the subcellular location of the alpha subunits and promote rapid inactivation. Homotetrameric channels display rapid activation and slow inactivation. This chain is Potassium voltage-gated channel subfamily A member 6 (Kcna6), found in Rattus norvegicus (Rat).